Reading from the N-terminus, the 316-residue chain is 2,3-dihydroxyphenylpropionate/2,3-dihydroxicinnamic acid 1,2-dioxygenase (316 aa).

The active-site Proton donor is H115. H179 acts as the Proton acceptor in catalysis.

The protein belongs to the LigB/MhpB extradiol dioxygenase family. In terms of assembly, homotetramer. Fe(2+) is required as a cofactor.

The catalysed reaction is 3-(2,3-dihydroxyphenyl)propanoate + O2 = (2Z,4E)-2-hydroxy-6-oxonona-2,4-dienedioate + H(+). It carries out the reaction (2E)-3-(2,3-dihydroxyphenyl)prop-2-enoate + O2 = (2Z,4E,7E)-2-hydroxy-6-oxonona-2,4,7-trienedioate + H(+). Its pathway is aromatic compound metabolism; 3-phenylpropanoate degradation. In terms of biological role, catalyzes the non-heme iron(II)-dependent oxidative cleavage of 2,3-dihydroxyphenylpropionic acid and 2,3-dihydroxicinnamic acid into 2-hydroxy-6-ketononadienedioate and 2-hydroxy-6-ketononatrienedioate, respectively. The protein is 2,3-dihydroxyphenylpropionate/2,3-dihydroxicinnamic acid 1,2-dioxygenase of Paraburkholderia xenovorans (strain LB400).